The following is a 315-amino-acid chain: GTPase Era (315 aa).

The Era-type G domain occupies Arg21–Pro190. Residues Gly29–Ser36 form a G1 region. Gly29–Ser36 is a binding site for GTP. A G2 region spans residues Gln55–Asn59. The interval Asp76–Gly79 is G3. GTP-binding positions include Asp76–Ile80 and Asn138–Asp141. The interval Asn138 to Asp141 is G4. The interval Phe169–Ala171 is G5. Positions Thr221–Pro297 constitute a KH type-2 domain.

It belongs to the TRAFAC class TrmE-Era-EngA-EngB-Septin-like GTPase superfamily. Era GTPase family. Monomer.

It is found in the cytoplasm. The protein localises to the cell inner membrane. Its function is as follows. An essential GTPase that binds both GDP and GTP, with rapid nucleotide exchange. Plays a role in 16S rRNA processing and 30S ribosomal subunit biogenesis and possibly also in cell cycle regulation and energy metabolism. The protein is GTPase Era of Synechocystis sp. (strain ATCC 27184 / PCC 6803 / Kazusa).